The primary structure comprises 500 residues: Putative DNA recombinase (500 aa).

Residues 1–144 (MIAIYVRVST…SGRLQKMKKG (144 aa)) enclose the Resolvase/invertase-type recombinase catalytic domain. Residue serine 9 is the O-(5'-phospho-DNA)-serine intermediate of the active site. Residues 152–288 (LYGYKFVKEK…QELLGQSKRK (137 aa)) constitute a DNA-binding region (recombinase). Residues 372–448 (KEAEQSNHLS…IQSKMKVLDD (77 aa)) are a coiled coil.

It in the N-terminal section; belongs to the site-specific recombinase resolvase family.

Its function is as follows. Putative site-specific recombinase having a very important role in sporulation. It probably plays a role in the recombination of SpoIIIC and SpoIVCB to form sigma K factor. The chain is Putative DNA recombinase (cisA) from Bacillus subtilis (strain 168).